Here is a 231-residue protein sequence, read N- to C-terminus: tRNA (guanine-N(7)-)-methyltransferase (231 aa).

S-adenosyl-L-methionine contacts are provided by Asp57, Glu82, Asp109, and Asp132. Asp132 is a catalytic residue. Substrate is bound by residues Lys136, Asp168, and Thr205–Glu208. The interval Ala194–Lys214 is disordered.

The protein belongs to the class I-like SAM-binding methyltransferase superfamily. TrmB family.

It carries out the reaction guanosine(46) in tRNA + S-adenosyl-L-methionine = N(7)-methylguanosine(46) in tRNA + S-adenosyl-L-homocysteine. The protein operates within tRNA modification; N(7)-methylguanine-tRNA biosynthesis. In terms of biological role, catalyzes the formation of N(7)-methylguanine at position 46 (m7G46) in tRNA. The protein is tRNA (guanine-N(7)-)-methyltransferase of Halorhodospira halophila (strain DSM 244 / SL1) (Ectothiorhodospira halophila (strain DSM 244 / SL1)).